The following is a 212-amino-acid chain: High frequency lysogenization protein HflD homolog (212 aa).

The stretch at 92–128 (LIALERKLNAKSAALDELGKRIGQLERQLEHFELLSE) forms a coiled coil.

The protein belongs to the HflD family.

The protein localises to the cytoplasm. It is found in the cell inner membrane. The polypeptide is High frequency lysogenization protein HflD homolog (Pectobacterium atrosepticum (strain SCRI 1043 / ATCC BAA-672) (Erwinia carotovora subsp. atroseptica)).